A 288-amino-acid polypeptide reads, in one-letter code: Acetyl-coenzyme A carboxylase carboxyl transferase subunit beta (288 aa).

In terms of domain architecture, CoA carboxyltransferase N-terminal spans 34 to 288 (LFAKCPACKH…HLVSFHGGGQ (255 aa)). The Zn(2+) site is built by Cys38, Cys41, Cys56, and Cys59. The C4-type zinc finger occupies 38–59 (CPACKHMIYKKDLGLAKICPTC).

The protein belongs to the AccD/PCCB family. Acetyl-CoA carboxylase is a heterohexamer composed of biotin carboxyl carrier protein (AccB), biotin carboxylase (AccC) and two subunits each of ACCase subunit alpha (AccA) and ACCase subunit beta (AccD). The cofactor is Zn(2+).

The protein localises to the cytoplasm. It carries out the reaction N(6)-carboxybiotinyl-L-lysyl-[protein] + acetyl-CoA = N(6)-biotinyl-L-lysyl-[protein] + malonyl-CoA. It functions in the pathway lipid metabolism; malonyl-CoA biosynthesis; malonyl-CoA from acetyl-CoA: step 1/1. Component of the acetyl coenzyme A carboxylase (ACC) complex. Biotin carboxylase (BC) catalyzes the carboxylation of biotin on its carrier protein (BCCP) and then the CO(2) group is transferred by the transcarboxylase to acetyl-CoA to form malonyl-CoA. This is Acetyl-coenzyme A carboxylase carboxyl transferase subunit beta from Streptococcus pyogenes serotype M49 (strain NZ131).